A 251-amino-acid polypeptide reads, in one-letter code: Glucosamine-6-phosphate deaminase (251 aa).

D73 serves as the catalytic Proton acceptor; for enolization step. The active-site For ring-opening step is N142. H144 functions as the Proton acceptor; for ring-opening step in the catalytic mechanism. The active-site For ring-opening step is the E149.

It belongs to the glucosamine/galactosamine-6-phosphate isomerase family. NagB subfamily.

It catalyses the reaction alpha-D-glucosamine 6-phosphate + H2O = beta-D-fructose 6-phosphate + NH4(+). The protein operates within amino-sugar metabolism; N-acetylneuraminate degradation; D-fructose 6-phosphate from N-acetylneuraminate: step 5/5. Catalyzes the reversible isomerization-deamination of glucosamine 6-phosphate (GlcN6P) to form fructose 6-phosphate (Fru6P) and ammonium ion. This Rhodopirellula baltica (strain DSM 10527 / NCIMB 13988 / SH1) protein is Glucosamine-6-phosphate deaminase.